A 156-amino-acid chain; its full sequence is MINLSILISSSEVSGPGGLFDINATLPLVAIQFILLMVTLNIILYSPLLTIIEERKEYVLSHLAQASEKLAQAKELTTQYEQDLETARKEAQLEIANSQNIHKEILDIELDISQKYIDNLLETISSDLLNKKKTALDSLDTIVTSLCTEVETKLSI.

Residues 24–44 traverse the membrane as a helical segment; sequence ATLPLVAIQFILLMVTLNIIL.

The protein belongs to the ATPase B chain family. F-type ATPases have 2 components, F(1) - the catalytic core - and F(0) - the membrane proton channel. F(1) has five subunits: alpha(3), beta(3), gamma(1), delta(1), epsilon(1). F(0) has four main subunits: a(1), b(1), b'(1) and c(10-14). The alpha and beta chains form an alternating ring which encloses part of the gamma chain. F(1) is attached to F(0) by a central stalk formed by the gamma and epsilon chains, while a peripheral stalk is formed by the delta, b and b' chains.

The protein localises to the plastid. It localises to the chloroplast thylakoid membrane. In terms of biological role, f(1)F(0) ATP synthase produces ATP from ADP in the presence of a proton or sodium gradient. F-type ATPases consist of two structural domains, F(1) containing the extramembraneous catalytic core and F(0) containing the membrane proton channel, linked together by a central stalk and a peripheral stalk. During catalysis, ATP synthesis in the catalytic domain of F(1) is coupled via a rotary mechanism of the central stalk subunits to proton translocation. Its function is as follows. Component of the F(0) channel, it forms part of the peripheral stalk, linking F(1) to F(0). The b'-subunit is a diverged and duplicated form of b found in plants and photosynthetic bacteria. This Thalassiosira pseudonana (Marine diatom) protein is ATP synthase subunit b', chloroplastic.